A 108-amino-acid chain; its full sequence is uncharacterized protein (108 aa).

Over residues 1–10 the composition is skewed to polar residues; sequence MSGISLTPVK. 2 disordered regions span residues 1–63 and 83–108; these read MSGI…RPPR and VLSP…PRTQ. Positions 33–62 are enriched in basic and acidic residues; the sequence is YVDRARPSADAKEHCAASDPEEWHSGDRPP.

This is an uncharacterized protein from Gallid herpesvirus 2 (strain Chicken/Md5/ATCC VR-987) (GaHV-2).